Here is a 419-residue protein sequence, read N- to C-terminus: Isocitrate dehydrogenase [NADP] (419 aa).

Position 102 (T102) interacts with NADP(+). Residues S111, N113, R117, R127, and R151 each contribute to the D-threo-isocitrate site. D306 contacts Mg(2+). Residues H338 to Y344, N351, Y390, and R394 contribute to the NADP(+) site.

It belongs to the isocitrate and isopropylmalate dehydrogenases family. Homodimer. It depends on Mg(2+) as a cofactor. The cofactor is Mn(2+).

It catalyses the reaction D-threo-isocitrate + NADP(+) = 2-oxoglutarate + CO2 + NADPH. Catalyzes the oxidative decarboxylation of isocitrate to 2-oxoglutarate and carbon dioxide with the concomitant reduction of NADP(+). This chain is Isocitrate dehydrogenase [NADP], found in Haloferax volcanii (strain ATCC 29605 / DSM 3757 / JCM 8879 / NBRC 14742 / NCIMB 2012 / VKM B-1768 / DS2) (Halobacterium volcanii).